Consider the following 290-residue polypeptide: Enoyl-CoA hydratase, mitochondrial (290 aa).

A mitochondrion-targeting transit peptide spans 1-27 (MAALRALLPRACSSLLSSVRCPELRRF). 98–101 (ADIK) provides a ligand contact to substrate. K101 bears the N6-acetyllysine; alternate mark. An N6-succinyllysine; alternate modification is found at K101. Phosphoserine is present on S114. K115 bears the N6-acetyllysine; alternate mark. K115 carries the N6-succinyllysine; alternate modification. G141 contributes to the substrate binding site. An N6-succinyllysine modification is found at K204. Residue K211 is modified to N6-acetyllysine. N6-acetyllysine; alternate is present on K217. At K217 the chain carries N6-succinyllysine; alternate.

The protein belongs to the enoyl-CoA hydratase/isomerase family. Homohexamer; dimer of trimers. In terms of processing, acetylation of Lys-101 is observed in liver mitochondria from fasted mice but not from fed mice.

The protein resides in the mitochondrion matrix. It catalyses the reaction a (3S)-3-hydroxyacyl-CoA = a (2E)-enoyl-CoA + H2O. The catalysed reaction is a (3E)-enoyl-CoA = a 4-saturated (2E)-enoyl-CoA. It carries out the reaction (3E)-hexenoyl-CoA = (2E)-hexenoyl-CoA. The enzyme catalyses (3S)-3-hydroxybutanoyl-CoA = (2E)-butenoyl-CoA + H2O. It catalyses the reaction 3-hydroxyisovaleryl-CoA = 3-methylbut-2-enoyl-CoA + H2O. The catalysed reaction is 3-hydroxypropanoyl-CoA = acryloyl-CoA + H2O. It carries out the reaction 3-hydroxybutanoyl-CoA = (2E)-butenoyl-CoA + H2O. The enzyme catalyses 2-methylpropenoyl-CoA + H2O = (S)-3-hydroxyisobutanoyl-CoA. It catalyses the reaction (3S)-hydroxyhexanoyl-CoA = (2E)-hexenoyl-CoA + H2O. The catalysed reaction is (3S)-hydroxydecanoyl-CoA = (2E)-decenoyl-CoA + H2O. Its pathway is lipid metabolism; fatty acid beta-oxidation. In terms of biological role, converts unsaturated trans-2-enoyl-CoA species ((2E)-enoyl-CoA) to the corresponding (3S)-3-hydroxyacyl-CoA species through addition of a water molecule to the double bond. Catalyzes the hydration of medium- and short-chained fatty enoyl-CoA thioesters from 4 carbons long (C4) up to C16. Has high substrate specificity for crotonyl-CoA ((2E)-butenoyl-CoA) and moderate specificity for acryloyl-CoA, 3-methylcrotonyl-CoA (3-methyl-(2E)-butenoyl-CoA) and methacrylyl-CoA ((2E)-2-methylpropenoyl-CoA). Can bind tiglyl-CoA (2-methylcrotonoyl-CoA), but hydrates only a small amount of this substrate. Plays a key role in the beta-oxidation spiral of short- and medium-chain fatty acid oxidation. At a lower rate than the hydratase reaction, catalyzes the isomerase reaction of trans-3-enoyl-CoA species (such as (3E)-hexenoyl-CoA) to trans-2-enoyl-CoA species (such as (2E)-hexenoyl-CoA), which are subsequently hydrated to 3(S)-3-hydroxyacyl-CoA species (such as (3S)-hydroxyhexanoyl-CoA). The sequence is that of Enoyl-CoA hydratase, mitochondrial from Mus musculus (Mouse).